The following is a 115-amino-acid chain: T cell receptor delta variable 1 (115 aa).

An N-terminal signal peptide occupies residues Met-1–Ala-21. The Ig-like domain maps to Gln-22–Glu-115. A disulfide bridge links Cys-43 with Cys-111.

In terms of assembly, gamma-delta TR is a heterodimer composed of a gamma and delta chain; disulfide-linked. The gamma-delta TR is associated with the transmembrane signaling CD3 coreceptor proteins following the stoichiometry: a single gamma-delta TR heterodimer associates with one CD3D-CD3E heterodimer, one CD3G-CD3E heterodimer and one CD247 homodimer forming a stable octameric structure. Upon activation, gamma-delta TR complex associates with FCER1G to initiate intracellular signaling.

The protein resides in the cell membrane. Its function is as follows. V region of the variable domain of T cell receptor (TR) delta chain that participates in the antigen recognition. Gamma-delta TRs recognize a variety of self and foreign non-peptide antigens frequently expressed at the epithelial boundaries between the host and external environment, including endogenous lipids presented by MH-like protein CD1D and phosphoantigens presented by butyrophilin-like molecule BTN3A1. Upon antigen recognition induces rapid, innate-like immune responses involved in pathogen clearance and tissue repair. Binding of gamma-delta TR complex to antigen triggers phosphorylation of immunoreceptor tyrosine-based activation motifs (ITAMs) in the CD3 chains by the LCK and FYN kinases, allowing the recruitment, phosphorylation, and activation of ZAP70 that facilitates phosphorylation of the scaffolding proteins LCP2 and LAT. This lead to the formation of a supramolecular signalosome that recruits the phospholipase PLCG1, resulting in calcium mobilization and ERK activation, ultimately leading to T cell expansion and differentiation into effector cells. Gamma-delta TRs are produced through somatic rearrangement of a limited repertoire of variable (V), diversity (D), and joining (J) genes. The potential diversity of gamma-delta TRs is conferred by the unique ability to rearrange (D) genes in tandem and to utilize all three reading frames. The combinatorial diversity is considerably increased by the sequence exonuclease trimming and random nucleotide (N) region additions which occur during the V-(D)-J rearrangements. This chain is T cell receptor delta variable 1, found in Homo sapiens (Human).